Consider the following 166-residue polypeptide: Thiol peroxidase (166 aa).

One can recognise a Thioredoxin domain in the interval 18–166 (LKVGDKAPDV…NYEALLKVLK (149 aa)). Cys-60 serves as the catalytic Cysteine sulfenic acid (-SOH) intermediate. A disulfide bond links Cys-60 and Cys-94.

It belongs to the peroxiredoxin family. Tpx subfamily. Homodimer.

The catalysed reaction is a hydroperoxide + [thioredoxin]-dithiol = an alcohol + [thioredoxin]-disulfide + H2O. Its function is as follows. Thiol-specific peroxidase that catalyzes the reduction of hydrogen peroxide and organic hydroperoxides to water and alcohols, respectively. Plays a role in cell protection against oxidative stress by detoxifying peroxides. In Helicobacter pylori (strain ATCC 700392 / 26695) (Campylobacter pylori), this protein is Thiol peroxidase.